The chain runs to 235 residues: Rab-like protein 3 (235 aa).

A small GTPase-like region spans residues 1–235 (MASLDRVKVL…GGNFKSLHYD (235 aa)). Residues 16 to 21 (GVGKSS), 148 to 150 (KLD), and 179 to 180 (DC) each bind GTP.

This sequence belongs to the small GTPase superfamily. Rab family. In terms of assembly, homodimer.

Its function is as follows. Required for KRAS signaling regulation and modulation of cell proliferation. Regulator of KRAS prenylation, and probably prenylation of other small GTPases. Required for lymphocyte development and function. Not required for myeloid cell development. The sequence is that of Rab-like protein 3 (rabl3) from Xenopus laevis (African clawed frog).